Consider the following 434-residue polypeptide: Glycerol-3-phosphate acyltransferase 3 (434 aa).

The chain crosses the membrane as a helical span at residues tryptophan 14–isoleucine 34. Residues serine 68 and serine 77 each carry the phosphoserine modification. 2 consecutive transmembrane segments (helical) span residues isoleucine 137–leucine 157 and valine 161–leucine 181. The HXXXXD motif motif lies at histidine 229–aspartate 234.

The protein belongs to the 1-acyl-sn-glycerol-3-phosphate acyltransferase family. As to expression, widely expressed. Expressed in liver, kidney, testis, brain, heart, skeletal muscle, thyroid, prostate, thymus and placenta. Also expressed lung and adipose tissue.

It is found in the endoplasmic reticulum membrane. It catalyses the reaction sn-glycerol 3-phosphate + an acyl-CoA = a 1-acyl-sn-glycero-3-phosphate + CoA. The enzyme catalyses a 1-acyl-sn-glycero-3-phosphate + an acyl-CoA = a 1,2-diacyl-sn-glycero-3-phosphate + CoA. It carries out the reaction dodecanoyl-CoA + sn-glycerol 3-phosphate = 1-dodecanoyl-sn-glycerol 3-phosphate + CoA. The catalysed reaction is sn-glycerol 3-phosphate + hexadecanoyl-CoA = 1-hexadecanoyl-sn-glycero-3-phosphate + CoA. It catalyses the reaction sn-glycerol 3-phosphate + (9Z)-octadecenoyl-CoA = 1-(9Z-octadecenoyl)-sn-glycero-3-phosphate + CoA. The enzyme catalyses (9Z,12Z)-octadecadienoyl-CoA + sn-glycerol 3-phosphate = 1-(9Z,12Z)-octadecadienoyl-sn-glycero-3-phosphate + CoA. It carries out the reaction 1-tetradecanoyl-sn-glycerol 3-phosphate + (9Z)-octadecenoyl-CoA = 1-tetradecanoyl-2-(9Z)-octadecenoyl-sn-glycero-3-phosphate + CoA. The catalysed reaction is 1-hexadecanoyl-sn-glycero-3-phosphate + (9Z)-octadecenoyl-CoA = 1-hexadecanoyl-2-(9Z-octadecenoyl)-sn-glycero-3-phosphate + CoA. It catalyses the reaction 1-(9Z-octadecenoyl)-sn-glycero-3-phosphate + (9Z)-octadecenoyl-CoA = 1,2-di-(9Z-octadecenoyl)-sn-glycero-3-phosphate + CoA. The enzyme catalyses 1-(6Z,9Z,12Z-octadecatrienoyl)-sn-glycero-3-phosphate + (9Z)-octadecenoyl-CoA = (6Z,9Z,12Z)-octadecatrienoyl-2-(9Z)-octadecenoyl-sn-glycero-3-phosphate + CoA. It carries out the reaction 1-(9Z,12Z,15Z)-octadecatrienoyl-sn-glycero-3-phosphate + (9Z)-octadecenoyl-CoA = 1-(9Z,12Z,15Z)-octadecatrienoyl-2-(9Z)-octadecenoyl-sn-glycero-3-phosphate + CoA. The catalysed reaction is 1-(9Z-octadecenoyl)-sn-glycero-3-phosphate + tetradecanoyl-CoA = 1-(9Z)-octadecenoyl-2-tetradecanoyl-sn-glycero-3-phosphate + CoA. It catalyses the reaction 1-(9Z-octadecenoyl)-sn-glycero-3-phosphate + hexadecanoyl-CoA = 1-(9Z)-octadecenoyl-2-hexadecanoyl-sn-glycero-3-phosphate + CoA. The enzyme catalyses 1-(9Z-octadecenoyl)-sn-glycero-3-phosphate + octadecanoyl-CoA = 1-(9Z-octadecenoyl)-2-octadecanoyl-sn-glycero-3-phosphate + CoA. It carries out the reaction 1-(9Z-octadecenoyl)-sn-glycero-3-phosphate + (9Z,12Z)-octadecadienoyl-CoA = 1-(9Z)-octadecenoyl-2-(9Z,12Z)-octadecadienoyl-sn-glycero-3-phosphate + CoA. The catalysed reaction is 1-(5Z,8Z,11Z,14Z-eicosatetraenoyl)-sn-glycero-3-phosphate + (9Z)-octadecenoyl-CoA = 1-(5Z,8Z,11Z,14Z)-eicosatetraenoyl-2-(9Z)-octadecenoyl-sn-glycero-3-phosphate + CoA. It participates in glycerolipid metabolism; triacylglycerol biosynthesis. It functions in the pathway phospholipid metabolism; CDP-diacylglycerol biosynthesis; CDP-diacylglycerol from sn-glycerol 3-phosphate: step 1/3. With respect to regulation, inhibited by N-ethylmaleimide (NEM). Functionally, converts glycerol-3-phosphate to 1-acyl-sn-glycerol-3-phosphate (lysophosphatidic acid or LPA) by incorporating an acyl moiety at the sn-1 position of the glycerol backbone. Also converts LPA into 1,2-diacyl-sn-glycerol-3-phosphate (phosphatidic acid or PA) by incorporating an acyl moiety at the sn-2 position of the glycerol backbone. Protects cells against lipotoxicity. This is Glycerol-3-phosphate acyltransferase 3 from Homo sapiens (Human).